The chain runs to 377 residues: NADH dehydrogenase [ubiquinone] 1 alpha subcomplex subunit 9, mitochondrial (377 aa).

A mitochondrion-targeting transit peptide spans 1–35 (MAAAAQSRVVRVLSMSRSAITAIATSVCHGPPRRQ). Residue lysine 175 is modified to N6-succinyllysine. N6-acetyllysine occurs at positions 189 and 370.

Belongs to the complex I NDUFA9 subunit family. Complex I is composed of 45 different subunits. This a component of the hydrophobic protein fraction. Interacts with BLOC1S1. Interacts with SLC2A4. Interacts with CLOCK. Interacts with RAB5IF. FAD serves as cofactor. Post-translationally, acetylated on lysine residues. BLOC1S1 is required for acetylation. Acetylated by CLOCK in a circadian manner.

It localises to the mitochondrion matrix. Functionally, accessory subunit of the mitochondrial membrane respiratory chain NADH dehydrogenase (Complex I), that is believed not to be involved in catalysis. Complex I functions in the transfer of electrons from NADH to the respiratory chain. The immediate electron acceptor for the enzyme is believed to be ubiquinone. The protein is NADH dehydrogenase [ubiquinone] 1 alpha subcomplex subunit 9, mitochondrial (NDUFA9) of Pongo abelii (Sumatran orangutan).